Here is an 806-residue protein sequence, read N- to C-terminus: MAAVTELDDQEMREAQREYLDFLDDEEDQGIYQSKVRDMISENQYRLIVNINDLRRKNEKRASLLMNNAFEGLIAFQRALKDFVASIDGTYAKQYEDFYIGLEGSFGSKHVTPRTLTSRFLSSVVCVEGIVTKCSLVRPKVVRSVHYCPATKKTIERKYTDLTSLEAFPSSAVYPTKDEENNPLETEYGLSIYKDHQTITIQEMPEKAPAGQLPRSVDIILDDDLVDKVKPGDRVQVIGTYRCLPSKQNGYTSASFRTILIACNVIQMSKEVTPVFSADDLAKIKKFSKSHSKDVFEQLSRSLAPSIHGHSYIKKAILCMLLGGVEKVLDNGTRIRGDINVLLIGDPSVAKSQLLRYVLFTAPRAIPTTGRGSSGVGLTAAVTTDQETGERRLEAGAMVLADRGVVCIDEFDKMSDMDRTAIHEVMEQGRVTIAKAGIHARLNARCSVLAAANPVYGRYDQYKTPMENIGLQDSLLSRFDLLFIMLDQMDPEHDREISDHVLRMHRYRSAGEQDGDALPLGSAVDILATEDPNVTSEEQQELQVYEKHDSLLHGVKKRREKVLSMEFMRKYIHVAKIFKPVLTQEAASFIAEEYTRLRNQDQMSTDVARTSPVTARSLETLIRLSTAHAKVRMSKTVQLQDAEAALELVQYAYFKKVLEKEKKRRRREGESDTEEEQTQPDGEGKKRRKKRRAQDGESHDPYEFSDTEDETPVVHTPKTPVNGQEEMETDSSAKPGLSGDRLKAFKSALLDAFKAAHAQSIAMAAMMEAINKNNDSPFSQAEVKAALELMEEANHIMVSDNIVFLI.

Residues Val-295–Leu-502 enclose the MCM domain. Gly-345–Ser-352 is an ATP binding site. The Arginine finger motif lies at Ser-477 to Asp-480. The disordered stretch occupies residues Lys-662–Ser-738. Basic and acidic residues predominate over residues Ala-693–Tyr-702.

This sequence belongs to the MCM family. As to quaternary structure, component of the mcm2-7 complex (RLF-M). The complex forms a toroidal hexameric ring with the proposed subunit order mcm2-mcm6-mcm4-mcm7-mcm3-mcm5. Begins to associate with zmcm6 into mcm complexes at the neurula stage. Component of the CMG helicase complex, composed of the mcm2-7 complex, the GINS complex and cdc45.

Its subcellular location is the nucleus. The protein resides in the chromosome. It catalyses the reaction ATP + H2O = ADP + phosphate + H(+). Functionally, acts as a component of the mcm2-7 complex (mcm complex) which is the putative replicative helicase essential for 'once per cell cycle' DNA replication initiation and elongation in eukaryotic cells. The active ATPase sites in the mcm2-7 ring are formed through the interaction surfaces of two neighboring subunits such that a critical structure of a conserved arginine finger motif is provided in trans relative to the ATP-binding site of the Walker A box of the adjacent subunit. The six ATPase active sites, however, are likely to contribute differentially to the complex helicase activity. The existence of maternal and zygotic forms of mcm3 and mcm6 suggests that specific forms of mcm2-7 complexes may be used during different stages of development. The protein is Zygotic DNA replication licensing factor mcm3 of Xenopus laevis (African clawed frog).